The primary structure comprises 170 residues: Protein-export protein SecB (170 aa).

It belongs to the SecB family. As to quaternary structure, homotetramer, a dimer of dimers. One homotetramer interacts with 1 SecA dimer.

The protein resides in the cytoplasm. One of the proteins required for the normal export of preproteins out of the cell cytoplasm. It is a molecular chaperone that binds to a subset of precursor proteins, maintaining them in a translocation-competent state. It also specifically binds to its receptor SecA. This chain is Protein-export protein SecB, found in Xanthomonas axonopodis pv. citri (strain 306).